A 698-amino-acid polypeptide reads, in one-letter code: Auxin response factor 22 (698 aa).

Positions Phe128–Lys230 form a DNA-binding region, TF-B3. Residues Thr549–Ala577 show a composition bias toward polar residues. The tract at residues Thr549–Asp579 is disordered. Positions Ala603–Arg683 constitute a PB1 domain.

The protein belongs to the ARF family. As to quaternary structure, homodimers and heterodimers. Expressed in roots, culms, leaves and young panicles.

It is found in the nucleus. In terms of biological role, auxin response factors (ARFs) are transcriptional factors that bind specifically to the DNA sequence 5'-TGTCTC-3' found in the auxin-responsive promoter elements (AuxREs). In Oryza sativa subsp. japonica (Rice), this protein is Auxin response factor 22 (ARF22).